Reading from the N-terminus, the 929-residue chain is Protocadherin gamma-B3 (929 aa).

An N-terminal signal peptide occupies residues 1–30; sequence MGNSSGWRGPAGQRRMLFLFLLSLLDQALS. Cadherin domains are found at residues 31–133, 134–242, 243–347, 348–452, 453–562, and 570–675; these read EPIR…PPTF, SQNI…PPVF, TQDM…APEI, TLAS…VPVF, HQAS…APLV, and EGSA…QPDL. The Extracellular portion of the chain corresponds to 31–691; sequence EPIRYAIPEE…SDPQAELQFH (661 aa). N-linked (GlcNAc...) asparagine glycosylation is present at asparagine 136. 2 N-linked (GlcNAc...) asparagine glycosylation sites follow: asparagine 419 and asparagine 545. Residues 692 to 712 traverse the membrane as a helical segment; it reads LVVALALISVLFLLAVILAIS. The Cytoplasmic portion of the chain corresponds to 713–929; it reads LRLRCSSRPA…KKKSGKKEKK (217 aa). 2 disordered regions span residues 791–838 and 899–929; these read NDNP…WPNN and ATLT…KEKK. A compositionally biased stretch (basic residues) spans 919–929; that stretch reads NKKKSGKKEKK.

It is found in the cell membrane. Functionally, potential calcium-dependent cell-adhesion protein. May be involved in the establishment and maintenance of specific neuronal connections in the brain. This chain is Protocadherin gamma-B3 (PCDHGB3), found in Homo sapiens (Human).